A 73-amino-acid polypeptide reads, in one-letter code: Large ribosomal subunit protein bL31 (73 aa).

Belongs to the bacterial ribosomal protein bL31 family. Type A subfamily. In terms of assembly, part of the 50S ribosomal subunit.

Its function is as follows. Binds the 23S rRNA. The chain is Large ribosomal subunit protein bL31 from Paracoccus denitrificans (strain Pd 1222).